The chain runs to 377 residues: Benzylmalonyl-CoA dehydrogenase (377 aa).

Residues 123–132 (ICMTEPNAGS), 156–158 (WIT), Arg266, Gln277, and 363–365 (TSE) each bind FAD.

This sequence belongs to the acyl-CoA dehydrogenase family. In terms of assembly, homotetramer. The cofactor is FAD.

It catalyses the reaction (2-aminobenzyl)malonyl-CoA + O2 + H(+) = (E)-2-aminocinnamoyl-CoA + H2O2 + CO2. It carries out the reaction benzylmalonyl-CoA + O2 + H(+) = (E)-cinnamoyl-CoA + H2O2 + CO2. Its function is as follows. Involved in degradation of indoleacetate, the most common member of the auxin class of plant hormones. Catalyzes the irreversible oxidative decarboxylation of (2-aminobenzyl)malonyl-CoA to 2-aminocinnamoyl-CoA and CO(2). In vitro, shows high catalytic efficiency with benzylmalonyl-CoA, a chemical analog of the physiological substrate, but otherwise accepts only a few medium-chain alkylmalonyl-CoA compounds as alternative substrates with low activities. This is Benzylmalonyl-CoA dehydrogenase from Aromatoleum aromaticum (strain DSM 19018 / LMG 30748 / EbN1) (Azoarcus sp. (strain EbN1)).